The chain runs to 153 residues: Ribosomal RNA large subunit methyltransferase H (153 aa).

Residues L70, G102, and 121–126 (LSRMTF) each bind S-adenosyl-L-methionine.

Belongs to the RNA methyltransferase RlmH family. As to quaternary structure, homodimer.

It localises to the cytoplasm. The catalysed reaction is pseudouridine(1915) in 23S rRNA + S-adenosyl-L-methionine = N(3)-methylpseudouridine(1915) in 23S rRNA + S-adenosyl-L-homocysteine + H(+). Specifically methylates the pseudouridine at position 1915 (m3Psi1915) in 23S rRNA. The polypeptide is Ribosomal RNA large subunit methyltransferase H (Geotalea daltonii (strain DSM 22248 / JCM 15807 / FRC-32) (Geobacter daltonii)).